Here is a 1394-residue protein sequence, read N- to C-terminus: MKDIFNFFEKPKDPLSFSAIRISLASPDKIRQWSHGEVKKPETINYRTFKPERDGLFCAKIFGPVKDYECNCGKYKRMKHRGVVCEKCGVEVIQSKVRRERLGHITLATPVAHIWFLKSLPSRIGNLLDITLKDLEKVLYCESYIVIDPKETTFQRGELLSEDRYQKALDEFGDDAFSAGMGGEAVLGLLRGVGPASKEHGEGIPGLANELRAEMKEATSDAKRKKIAKRLKVVEAFVASGNKPEWMMLEVIPVIPPDLRPLVPLDGGRFATSDLNDLYRRVINRNNRLKRLQELNAPDIIIRNEKRMLQEAVDALFDNGRRGKTITGPNKRPLKSLSDMLKGKQGRFRQNLLGKRVDYSGRSVIVVGPELKLHQCGLPKIMALELFKPFIYNKLEEKGYVTTIKSAKKMVEKERPEVWDILDEVIREHPVLLNRAPTLHRLGIQAFEPVLIEGKAIQLHPLVCTAFNADFDGDQMAVHVPLSIEAQMEARVLMMSTNNILSPAHGKPIIVPSQDIVLGIYYMTRERAFARGEGKVFASPEEVRAAYDQGEVDLQAKVWVRMDGKRVETTVGRVLLYDIVPRRLSFESINKVMDKKQLQGLIDLTYRLCGEKETVLLADRVRSMGYGNATRAGISIALDNMVIPRKKVDLLERATREVDDIQAQYTEGLITIGERYNKVIDIWAQVTEEVAQEMMGEIGTETAVGTGKDGKREERRQPSFNPIYIMADSGARGSAQQIRQLAGMRGLMAKPSGEIIETPITANFREGLNVLQYFISTHGARKGLADTALKTANSGYLTRRLVDVAQDAIITEYDCGAMDGITLGALVEGGEIIEPMGERILGRVALDDMLDPFSGNVLVKANEEIDEGKVKLIENAGIDKVKIRSVLTCQARRGICVECYGRDLARGRKVNIGEAVGVIAAQSIGEPGTQLTMRTFHIGGAASRRAEQSTIENRNAGLIKFNNVSVAKKRDGTLIVMNRNGEIIVTDDQGRERERYGVVYGAKLLVREGQKVEANQLLAEWDPYSMPIITEVAGRVKYGDLVDGVTISEQVDEITGLARKAVIASKDPDARPRISIKDEEGRTKKLANSDADARYMLPEGANLVVNDGDEVDAGDVIAKMPRETTKTKDITGGLPRVAELFEARKPKEHAVISEIDGVVAFGKDTKGKRKVVITPEVDSKLRPDLAKEYLIGKGKHISVHTGDRVRAGEALMDGAANPHDILRVLGEKELARWLVDEVQEVYRLQGVKINDKHIETIVRQMLRRVRIVDVGDTEFLADEQVEKFAFEEENERVLKAGGRAAQGEPLLLGITKASLSTESFISASSFQETTKVLTEAAISGKVDYLRGLKENVIMGRLVPAGTGLGAYKHLDIEVETPVDAVEEAEEALAVGAEE.

The Zn(2+) site is built by cysteine 70, cysteine 72, cysteine 85, and cysteine 88. Mg(2+) is bound by residues aspartate 470, aspartate 472, and aspartate 474. Residues cysteine 815, cysteine 889, cysteine 896, and cysteine 899 each coordinate Zn(2+).

The protein belongs to the RNA polymerase beta' chain family. As to quaternary structure, the RNAP catalytic core consists of 2 alpha, 1 beta, 1 beta' and 1 omega subunit. When a sigma factor is associated with the core the holoenzyme is formed, which can initiate transcription. It depends on Mg(2+) as a cofactor. Zn(2+) is required as a cofactor.

It catalyses the reaction RNA(n) + a ribonucleoside 5'-triphosphate = RNA(n+1) + diphosphate. DNA-dependent RNA polymerase catalyzes the transcription of DNA into RNA using the four ribonucleoside triphosphates as substrates. The sequence is that of DNA-directed RNA polymerase subunit beta' from Anaeromyxobacter sp. (strain K).